The sequence spans 243 residues: Adenine phosphoribosyltransferase 1, chloroplastic (243 aa).

Residues 1-52 (MQTIIISPLVSHRLCLARAVPCNRLLNNHHRAPPSIRLSNHRSTTSLRLFSS) constitute a chloroplast transit peptide. At Gln-2 the chain carries N-acetylalanine.

This sequence belongs to the purine/pyrimidine phosphoribosyltransferase family. In terms of assembly, homodimer.

The protein resides in the plastid. It localises to the chloroplast. Its subcellular location is the cytoplasm. The enzyme catalyses AMP + diphosphate = 5-phospho-alpha-D-ribose 1-diphosphate + adenine. Its pathway is purine metabolism; AMP biosynthesis via salvage pathway; AMP from adenine: step 1/1. Catalyzes a salvage reaction resulting in the formation of AMP, that is energically less costly than de novo synthesis. Contributes primarily to the recycling of adenine into adenylate nucleotides, but is also involved in the inactivation of cytokinins by phosphoribosylation. Catalyzes the conversion of cytokinins from free bases (active form) to the corresponding nucleotides (inactive form). The sequence is that of Adenine phosphoribosyltransferase 1, chloroplastic (APT1) from Arabidopsis thaliana (Mouse-ear cress).